We begin with the raw amino-acid sequence, 264 residues long: uncharacterized protein (264 aa).

A divalent metal cation-binding residues include His-5, His-7, Glu-93, His-134, His-158, and Asp-208.

Belongs to the metallo-dependent hydrolases superfamily. TatD-type hydrolase family. The cofactor is a divalent metal cation.

This is an uncharacterized protein from Mycobacterium tuberculosis (strain ATCC 25618 / H37Rv).